The primary structure comprises 526 residues: Threonine synthase 1, chloroplastic (526 aa).

Residues 1–40 constitute a chloroplast transit peptide; the sequence is MASSCLFNASVSSLNPKQDPIRRHRSTSLLRHRPVVISCT. S-adenosyl-L-methionine-binding positions include 142-144, 165-167, asparagine 172, leucine 173, lysine 181, and asparagine 187; these read PYG and SAF. Lysine 203 bears the N6-(pyridoxal phosphate)lysine mark. Residues 335–339 and threonine 472 each bind pyridoxal 5'-phosphate; that span reads GNLGN.

It belongs to the threonine synthase family. As to quaternary structure, homodimer. Pyridoxal 5'-phosphate is required as a cofactor.

It localises to the plastid. Its subcellular location is the chloroplast. The enzyme catalyses O-phospho-L-homoserine + H2O = L-threonine + phosphate. Its pathway is amino-acid biosynthesis; L-threonine biosynthesis; L-threonine from L-aspartate: step 5/5. Allosterically activated by S-adenosyl-L-methionine (SAM). Activated by S-adenosyl-L-ethionine, 5'-amino-5'-deoxyadenosine, sinefungin and 5'-deoxy-5-methylthioadenosine. Inhibited by AMP. Catalyzes the gamma-elimination of phosphate from L-phosphohomoserine and the beta-addition of water to produce L-threonine. In Arabidopsis thaliana (Mouse-ear cress), this protein is Threonine synthase 1, chloroplastic (TS1).